Consider the following 181-residue polypeptide: Large ribosomal subunit protein uL5 (181 aa).

It belongs to the universal ribosomal protein uL5 family. Part of the 50S ribosomal subunit; part of the 5S rRNA/L5/L18/L25 subcomplex. Contacts the 5S rRNA and the P site tRNA. Forms a bridge to the 30S subunit in the 70S ribosome.

Functionally, this is one of the proteins that bind and probably mediate the attachment of the 5S RNA into the large ribosomal subunit, where it forms part of the central protuberance. In the 70S ribosome it contacts protein S13 of the 30S subunit (bridge B1b), connecting the 2 subunits; this bridge is implicated in subunit movement. Contacts the P site tRNA; the 5S rRNA and some of its associated proteins might help stabilize positioning of ribosome-bound tRNAs. In Campylobacter lari (strain RM2100 / D67 / ATCC BAA-1060), this protein is Large ribosomal subunit protein uL5.